The chain runs to 210 residues: Proteasome subunit beta (210 aa).

A propeptide spans 1 to 9 (removed in mature form; by autocatalysis); it reads MDNDKYLKG. Thr-10 acts as the Nucleophile in catalysis.

This sequence belongs to the peptidase T1B family. As to quaternary structure, the 20S proteasome core is composed of 14 alpha and 14 beta subunits that assemble into four stacked heptameric rings, resulting in a barrel-shaped structure. The two inner rings, each composed of seven catalytic beta subunits, are sandwiched by two outer rings, each composed of seven alpha subunits. The catalytic chamber with the active sites is on the inside of the barrel. Has a gated structure, the ends of the cylinder being occluded by the N-termini of the alpha-subunits. Is capped at one or both ends by the proteasome regulatory ATPase, PAN.

It localises to the cytoplasm. The catalysed reaction is Cleavage of peptide bonds with very broad specificity.. The formation of the proteasomal ATPase PAN-20S proteasome complex, via the docking of the C-termini of PAN into the intersubunit pockets in the alpha-rings, triggers opening of the gate for substrate entry. Interconversion between the open-gate and close-gate conformations leads to a dynamic regulation of the 20S proteasome proteolysis activity. In terms of biological role, component of the proteasome core, a large protease complex with broad specificity involved in protein degradation. The chain is Proteasome subunit beta from Methanosarcina thermophila.